The sequence spans 629 residues: Flap endonuclease GEN-like 1 (629 aa).

Positions 1-87 are N-domain; the sequence is MGVGGSFWDL…DGQPSPLKSQ (87 aa). The tract at residues 2–98 is XPG-N domain; it reads GVGGSFWDLL…RAARFFRGSG (97 aa). Residues aspartate 31, aspartate 78, glutamate 148, glutamate 150, aspartate 169, aspartate 171, and aspartate 221 each coordinate Mg(2+). The segment at 136–221 is XPG-I domain; that stretch reads EYLGMPVLRA…VAMALLVGSD (86 aa). Positions 136 to 225 are I-domain; it reads EYLGMPVLRA…LLVGSDHDLH (90 aa). Positions 221–421 are 5'-3' exonuclease domain; sequence DHDLHGVPGF…MLPMLSTIYL (201 aa). A disordered region spans residues 594–617; it reads KKGLSGDSGKDGSRKSSDVDLSKN. The segment covering 601 to 614 has biased composition (basic and acidic residues); the sequence is SGKDGSRKSSDVDL.

The protein belongs to the XPG/RAD2 endonuclease family. GEN subfamily. Monomer. Interacts with PCNA. PCNA stimulates the nuclease activity without altering cleavage specificity. The cofactor is Mg(2+). In terms of tissue distribution, highly expressed in anthers. Expressed in roots and leaves.

It localises to the nucleus. Its function is as follows. Endonuclease which cleaves flap structures at the junction between single-stranded DNA and double-stranded DNA. Possesses both single-stranded and double-stranded DNA-binding activities. Involved in early microspore development, but does not alter meiosis or tapetal cells development. Possesses Holliday junction (HJ) resolvase activity in vitro. Cleaves HJ at symmetrically related sites of the branch point. In Oryza sativa subsp. japonica (Rice), this protein is Flap endonuclease GEN-like 1.